The chain runs to 215 residues: Nascent polypeptide-associated complex subunit alpha (215 aa).

The disordered stretch occupies residues 1–81 (MPGEATETVP…SEKKARKAMS (81 aa)). The segment covering 9–28 (VPATEQELPQPQAETGSGTE) has biased composition (polar residues). Residues 29-40 (SDSDESVPELEG) are compositionally biased toward acidic residues. A Phosphoserine; by ILK1 modification is found at serine 43. Residues 44–57 (TQATTQQAQLAAAA) show a composition bias toward low complexity. The tract at residues 69 to 80 (QSRSEKKARKAM) is required for DNA-binding. The NAC-A/B domain occupies 70-135 (SRSEKKARKA…AKIEDLSQQA (66 aa)). The RNA/DNA-binding stretch occupies residues 93–108 (RVTIRKSKNILFVITK). Serine 132 carries the post-translational modification Phosphoserine. At lysine 142 the chain carries N6-acetyllysine; alternate. Residue lysine 142 forms a Glycyl lysine isopeptide (Lys-Gly) (interchain with G-Cter in SUMO2); alternate linkage. At threonine 159 the chain carries Phosphothreonine; by GSK3-beta. Threonine 161 carries the post-translational modification Phosphothreonine. Residues serine 166, serine 186, serine 191, and serine 203 each carry the phosphoserine modification. In terms of domain architecture, UBA spans 176-213 (VEVKDIEWVMSQANVSRAKAVRALKNNSNNIVNAIMEL).

This sequence belongs to the NAC-alpha family. As to quaternary structure, part of the nascent polypeptide-associated complex (NAC), which is a heterodimer of NACA and BTF3 (via NAC-A/B domains). NAC associates with ribosomes through the BTF3/NACB subunit and contacts the ribosomal protein L23, which is positioned near the exiting site. Both subunits can contact nascent polypeptide chains. NACA may also form homodimers, and only this form binds DNA. Interacts with TBP and JUN. In terms of processing, phosphorylation of Ser-43 by ILK during cell adhesion may promote nuclear localization. Phosphorylation of Thr-159 by GSK3B may promote proteasome mediated degradation.

The protein resides in the cytoplasm. It is found in the nucleus. In terms of biological role, prevents inappropriate targeting of non-secretory polypeptides to the endoplasmic reticulum (ER). Binds to nascent polypeptide chains as they emerge from the ribosome and blocks their interaction with the signal recognition particle (SRP), which normally targets nascent secretory peptides to the ER. Also reduces the inherent affinity of ribosomes for protein translocation sites in the ER membrane (M sites). May act as a specific coactivator for JUN, binding to DNA and stabilizing the interaction of JUN homodimers with target gene promoters. This is Nascent polypeptide-associated complex subunit alpha from Chinchilla lanigera (Long-tailed chinchilla).